The chain runs to 311 residues: Dehydrogenase/reductase SDR family member 7C (311 aa).

The first 18 residues, 1–18 (MGLMAVLMLPLLLLGISG), serve as a signal peptide directing secretion. NAD(+)-binding residues include S47, L49, Y191, K195, and S226. The active-site Proton acceptor is Y191.

This sequence belongs to the short-chain dehydrogenases/reductases (SDR) family. In terms of tissue distribution, expressed in skeletal muscle and cardiac muscle. Also expressed in liver, kidney, adipocytes and skin.

It is found in the sarcoplasmic reticulum membrane. The catalysed reaction is all-trans-retinol + NAD(+) = all-trans-retinal + NADH + H(+). Its function is as follows. NADH-dependent oxidoreductase which catalyzes the oxidation of all-trans-retinol to all-trans-retinal. Plays a role in the regulation of cardiac and skeletal muscle metabolic functions. Maintains Ca(2+) intracellular homeostasis by repressing Ca(2+) release from the sarcoplasmic reticulum (SR) in myotubes, possibly through local alternations in NAD/NADH or retinol/retinal. Also plays a role in Ca(2+) homeostasis by controlling Ca(2+) overload in the cytosol and the SR in myotubes. Involved in glucose uptake into skeletal muscles and muscle performance by activating PI3K and mTORC2-mediated AKT1 phosphorylation signaling pathways, possibly through the action of its downstream catalytic product all-trans-retinoic acid. The sequence is that of Dehydrogenase/reductase SDR family member 7C from Mus musculus (Mouse).